The chain runs to 101 residues: Large ribosomal subunit protein uL24 (101 aa).

It belongs to the universal ribosomal protein uL24 family. As to quaternary structure, part of the 50S ribosomal subunit.

Functionally, one of two assembly initiator proteins, it binds directly to the 5'-end of the 23S rRNA, where it nucleates assembly of the 50S subunit. Its function is as follows. One of the proteins that surrounds the polypeptide exit tunnel on the outside of the subunit. The polypeptide is Large ribosomal subunit protein uL24 (Elusimicrobium minutum (strain Pei191)).